The following is a 469-amino-acid chain: Citrate synthase, mitochondrial (469 aa).

A mitochondrion-targeting transit peptide spans 1 to 33 (MAPVMRLGSAALRSSIHLTSRQTAFTAARCYSS). Residue His-352 is part of the active site.

Belongs to the citrate synthase family.

Its subcellular location is the mitochondrion matrix. It catalyses the reaction oxaloacetate + acetyl-CoA + H2O = citrate + CoA + H(+). It functions in the pathway carbohydrate metabolism; tricarboxylic acid cycle; isocitrate from oxaloacetate: step 1/2. This is Citrate synthase, mitochondrial (cit-1) from Neurospora crassa (strain ATCC 24698 / 74-OR23-1A / CBS 708.71 / DSM 1257 / FGSC 987).